A 181-amino-acid chain; its full sequence is MSNTTLHATTIYAVRHNGKAAMAGDGQVTLGQQVIMKQTARKVRRLYEGKVLAGFAGSVADAFTLFEKFETKLQQFSGNLERAAVELAQEWRGDKQLRQLEAMLIVMDKDAILVVSGTGEVIAPDDDLIAIGSGGNYALSAGRALKHHASHLSAEEMAYESLKVAADICVFTNDNIVVETL.

The active site involves T9. Na(+)-binding residues include A166, C169, and T172.

Belongs to the peptidase T1B family. HslV subfamily. A double ring-shaped homohexamer of HslV is capped on each side by a ring-shaped HslU homohexamer. The assembly of the HslU/HslV complex is dependent on binding of ATP.

It localises to the cytoplasm. The enzyme catalyses ATP-dependent cleavage of peptide bonds with broad specificity.. Its activity is regulated as follows. Allosterically activated by HslU binding. Its function is as follows. Protease subunit of a proteasome-like degradation complex believed to be a general protein degrading machinery. The sequence is that of ATP-dependent protease subunit HslV from Staphylococcus aureus (strain bovine RF122 / ET3-1).